The chain runs to 312 residues: Pantothenate kinase (312 aa).

97 to 104 (GSVAVGKS) lines the ATP pocket.

Belongs to the prokaryotic pantothenate kinase family.

It is found in the cytoplasm. It carries out the reaction (R)-pantothenate + ATP = (R)-4'-phosphopantothenate + ADP + H(+). It participates in cofactor biosynthesis; coenzyme A biosynthesis; CoA from (R)-pantothenate: step 1/5. In Mycolicibacterium smegmatis (strain ATCC 700084 / mc(2)155) (Mycobacterium smegmatis), this protein is Pantothenate kinase.